Here is a 1414-residue protein sequence, read N- to C-terminus: DNA-directed RNA polymerase subunit beta' (1414 aa).

Positions 70, 72, 85, and 88 each coordinate Zn(2+). Mg(2+)-binding residues include aspartate 460, aspartate 462, and aspartate 464. Zn(2+) is bound by residues cysteine 815, cysteine 889, cysteine 896, and cysteine 899. Residues 1395-1414 are disordered; the sequence is EAEAQFADISSTPDSDTDAS.

This sequence belongs to the RNA polymerase beta' chain family. As to quaternary structure, the RNAP catalytic core consists of 2 alpha, 1 beta, 1 beta' and 1 omega subunit. When a sigma factor is associated with the core the holoenzyme is formed, which can initiate transcription. The cofactor is Mg(2+). Zn(2+) serves as cofactor.

It carries out the reaction RNA(n) + a ribonucleoside 5'-triphosphate = RNA(n+1) + diphosphate. DNA-dependent RNA polymerase catalyzes the transcription of DNA into RNA using the four ribonucleoside triphosphates as substrates. This chain is DNA-directed RNA polymerase subunit beta', found in Herminiimonas arsenicoxydans.